Reading from the N-terminus, the 367-residue chain is Phospho-N-acetylmuramoyl-pentapeptide-transferase (367 aa).

Transmembrane regions (helical) follow at residues 28–48 (GALMTAMLIAFVFGKPMIGWL), 75–95 (TMGGFLILLGVMVGTLLWADL), 96–116 (TNAYVWIVIFVTAGFGVIGFI), 134–154 (FKLVGEFAIALIAVVWATHTA), 175–195 (LMINIGPLFFVFGCVVIVGSG), 206–226 (GLAIVPVMIAAATFGVIAYVV), 243–263 (AGEILIFCGALIGAGIGFLWW), 271–291 (FMGDTGSLSLGGALGTIAVAI), 295–315 (LVLAIVGGLFVLELVSVMVQV), and 344–364 (TIVIRFWIIAVILALIGLATL).

It belongs to the glycosyltransferase 4 family. MraY subfamily. The cofactor is Mg(2+).

Its subcellular location is the cell inner membrane. It carries out the reaction UDP-N-acetyl-alpha-D-muramoyl-L-alanyl-gamma-D-glutamyl-meso-2,6-diaminopimeloyl-D-alanyl-D-alanine + di-trans,octa-cis-undecaprenyl phosphate = di-trans,octa-cis-undecaprenyl diphospho-N-acetyl-alpha-D-muramoyl-L-alanyl-D-glutamyl-meso-2,6-diaminopimeloyl-D-alanyl-D-alanine + UMP. It participates in cell wall biogenesis; peptidoglycan biosynthesis. Functionally, catalyzes the initial step of the lipid cycle reactions in the biosynthesis of the cell wall peptidoglycan: transfers peptidoglycan precursor phospho-MurNAc-pentapeptide from UDP-MurNAc-pentapeptide onto the lipid carrier undecaprenyl phosphate, yielding undecaprenyl-pyrophosphoryl-MurNAc-pentapeptide, known as lipid I. This is Phospho-N-acetylmuramoyl-pentapeptide-transferase from Maricaulis maris (strain MCS10) (Caulobacter maris).